The chain runs to 710 residues: Polyribonucleotide nucleotidyltransferase (710 aa).

Mg(2+) is bound by residues Asp-486 and Asp-492. Residues 553–612 (PRFETIKIHPDKIRDIIGKGGATIRSITEETNSSIDIDDDGTVKVYADDNEALQAALNRI) form the KH domain. An S1 motif domain is found at 622–690 (GAIYEGTVVR…QRGRIKLSIK (69 aa)).

The protein belongs to the polyribonucleotide nucleotidyltransferase family. As to quaternary structure, component of the RNA degradosome, which is a multiprotein complex involved in RNA processing and mRNA degradation. Requires Mg(2+) as cofactor.

It is found in the cytoplasm. The catalysed reaction is RNA(n+1) + phosphate = RNA(n) + a ribonucleoside 5'-diphosphate. In terms of biological role, involved in mRNA degradation. Catalyzes the phosphorolysis of single-stranded polyribonucleotides processively in the 3'- to 5'-direction. In Cellvibrio japonicus (strain Ueda107) (Pseudomonas fluorescens subsp. cellulosa), this protein is Polyribonucleotide nucleotidyltransferase.